Consider the following 494-residue polypeptide: Tripartite motif-containing protein 5 (494 aa).

Ala-2 is subject to N-acetylalanine. The segment at 15–59 (CPICLELLTEPLSLDCGHSFCQACITANHKESTLHQGERSCPLCR) adopts an RING-type zinc-finger fold. Ser-86 is subject to Phosphoserine. A B box-type zinc finger spans residues 91 to 132 (QKVDLCARHGEKLLLFCQQDGNVICWLCERSQEHRGHHTFLV). Zn(2+) contacts are provided by Cys-96, His-99, Cys-118, and His-124. The stretch at 140 to 223 (RENLQVVLEM…RLVQSENDMV (84 aa)) forms a coiled coil. The tract at residues 186–199 (FKQLRDILDCEESN) is required for interaction with GABARAP and for autophagy. Residues 280 to 494 (PDLKGMLQVS…LPMTLCSPRS (215 aa)) enclose the B30.2/SPRY domain.

Belongs to the TRIM/RBCC family. Can form homodimers and homotrimers. In addition to lower-order dimerization, also exhibits a higher-order multimerization and both low- and high-order multimerizations are essential for its restriction activity. Interacts with BTBD1 and BTBD2. Interacts with PSMC4, PSMC5, PSMD7 and HSPA8/HSC70. Interacts (via B30.2/SPRY domain) with HSPA1A/B. Interacts with PSMC2, MAP3K7/TAK1, TAB2 and TAB3. Interacts with SQSTM1. Interacts with TRIM6 and TRIM34. Interacts with ULK1 (phosphorylated form), GABARAP, GABARAPL1, GABARAPL2, MAP1LC3A, MAP1LC3C and BECN1. Degraded in a proteasome-independent fashion in the absence of viral infection but in a proteasome-dependent fashion following exposure to restriction sensitive virus. Post-translationally, autoubiquitinated in a RING finger- and UBE2D2-dependent manner. Monoubiquitinated by TRIM21. Deubiquitinated by Yersinia YopJ. Ubiquitination may not lead to proteasomal degradation.

The protein resides in the cytoplasm. The protein localises to the nucleus. The enzyme catalyses S-ubiquitinyl-[E2 ubiquitin-conjugating enzyme]-L-cysteine + [acceptor protein]-L-lysine = [E2 ubiquitin-conjugating enzyme]-L-cysteine + N(6)-ubiquitinyl-[acceptor protein]-L-lysine.. The protein operates within protein modification; protein ubiquitination. Capsid-specific restriction factor that prevents infection from non-host-adapted retroviruses. Blocks viral replication early in the life cycle, after viral entry but before reverse transcription. In addition to acting as a capsid-specific restriction factor, also acts as a pattern recognition receptor that activates innate immune signaling in response to the retroviral capsid lattice. Binding to the viral capsid triggers its E3 ubiquitin ligase activity, and in concert with the heterodimeric ubiquitin conjugating enzyme complex UBE2V1-UBE2N (also known as UBC13-UEV1A complex) generates 'Lys-63'-linked polyubiquitin chains, which in turn are catalysts in the autophosphorylation of the MAP3K7/TAK1 complex (includes TAK1, TAB2, and TAB3). Activation of the MAP3K7/TAK1 complex by autophosphorylation results in the induction and expression of NF-kappa-B and MAPK-responsive inflammatory genes, thereby leading to an innate immune response in the infected cell. Plays a role in regulating autophagy through activation of autophagy regulator BECN1 by causing its dissociation from its inhibitors BCL2 and TAB2. This is Tripartite motif-containing protein 5 (TRIM5) from Plecturocebus donacophilus (Bolivian gray titi monkey).